The chain runs to 183 residues: Probable transcription termination protein NusA (183 aa).

A KH domain is found at 32 to 98 (DERVAFIVKE…DDVWVKRVGK (67 aa)). The interval 149 to 183 (RKRAKRPVVKDQQQEQTETKQETDVQQDVKETVKE) is disordered. Residues 156-183 (VVKDQQQEQTETKQETDVQQDVKETVKE) show a composition bias toward basic and acidic residues.

The protein belongs to the NusA family.

Its subcellular location is the cytoplasm. Participates in transcription termination. This chain is Probable transcription termination protein NusA, found in Methanocaldococcus jannaschii (strain ATCC 43067 / DSM 2661 / JAL-1 / JCM 10045 / NBRC 100440) (Methanococcus jannaschii).